The primary structure comprises 287 residues: Pantothenate synthetase (287 aa).

An ATP-binding site is contributed by 37–44 (MGALHEGH). His44 (proton donor) is an active-site residue. Gln68 provides a ligand contact to (R)-pantoate. Gln68 lines the beta-alanine pocket. Residue 154 to 157 (GQKD) coordinates ATP. Gln160 is a (R)-pantoate binding site. ATP contacts are provided by residues Val183 and 191-194 (LSSR).

Belongs to the pantothenate synthetase family. Homodimer.

Its subcellular location is the cytoplasm. The enzyme catalyses (R)-pantoate + beta-alanine + ATP = (R)-pantothenate + AMP + diphosphate + H(+). It participates in cofactor biosynthesis; (R)-pantothenate biosynthesis; (R)-pantothenate from (R)-pantoate and beta-alanine: step 1/1. Catalyzes the condensation of pantoate with beta-alanine in an ATP-dependent reaction via a pantoyl-adenylate intermediate. The chain is Pantothenate synthetase from Leifsonia xyli subsp. xyli (strain CTCB07).